The chain runs to 512 residues: MSNQNAVETKTDVVLVGAGIMSATLGALLRQLQPDWSISTFERLDAVAAESSDPWNNAGTGHSALCELNYTPENSDGTVDIKKAVNVNEQFQVSRQFWAHAVEQGVLTQPKEFINPIPHVSFVHGEANAKYLRARYDALAGHTLFRGMEYIDDPAEFSERLPLMAKGRDFSDPIALNWSQDGTDVDFGALTKQLIGYIGKTGGKMYFGHEVTNLTQNSDKSWTVKVTNRRTGEKRTVRSRFVFVGAGGGALHLLQKSGIKEAKGFGGFPVSGAFLRCTNPELIDQHSAKVYGKAAVGAPPMSVPHLDTRVIGNKPGLLFGPYAGWSPKFLKQGRVTDLPGSVKPNNILSMLGVGVSELGLVKYLVSELAKNEAGRIWDLREFAPKAQAQDWELITAGQRVQVIRRAKGKGGVLEFGTAVVAAEDGSIAGLLGASPGASTAVPAMLDVLERCFPTEFQGWKGKLREMVPSIGVKLTDNEGLFNQVWDWSSKVLELDSAGASESAPVADTVATV.

The protein belongs to the MQO family. FAD serves as cofactor.

The catalysed reaction is (S)-malate + a quinone = a quinol + oxaloacetate. Its pathway is carbohydrate metabolism; tricarboxylic acid cycle; oxaloacetate from (S)-malate (quinone route): step 1/1. This chain is Probable malate:quinone oxidoreductase, found in Rhodococcus erythropolis (strain PR4 / NBRC 100887).